The following is a 209-amino-acid chain: Auxin-binding protein ABP19b (209 aa).

The N-terminal stretch at 1 to 18 is a signal peptide; it reads MIFPIFFTFFLLLSTSHA. Residues cysteine 24 and cysteine 39 are joined by a disulfide bond. The Cupin type-1 domain maps to 53–199; sequence SGLGIAGNTT…TTLLDAPQIK (147 aa). The N-linked (GlcNAc...) asparagine glycan is linked to asparagine 60. Positions 101, 103, 108, and 147 each coordinate Mn(2+).

This sequence belongs to the germin family. As to quaternary structure, interacts with ABP20.

Its subcellular location is the secreted. The protein localises to the extracellular space. It localises to the apoplast. The protein resides in the cell wall. Probable receptor for the plant growth-promoting hormone auxin. The protein is Auxin-binding protein ABP19b (ABP19B) of Prunus persica (Peach).